Consider the following 267-residue polypeptide: Myeloid leukemia factor 1 (267 aa).

Phosphoserine occurs at positions 6, 8, 32, and 34. A disordered region spans residues 39 to 67 (RDLLSISDGRGRTHNRRERDDGEDSLTHA). The interaction with COPS3 stretch occupies residues 50–125 (RTHNRRERDD…VGDEPPKVFQ (76 aa)).

The protein belongs to the MLF family. As to quaternary structure, interacts with CENPU. Also interacts with NRBP1/MADM, YWHAZ/14-3-3-zeta and HNRPUL2/MANP. NRBP1 recruits a serine kinase which phosphorylates both itself and MLF1. Phosphorylated MLF1 then binds to YWHAZ and is retained in the cytoplasm. Retained in the nucleus by binding to HNRPUL2. Binds to COPS3/CSN3 which is required for suppression of COP1 and activation of p53. Phosphorylation is required for binding to YWHAZ. As to expression, highly expressed in skeletal muscle, heart, testis. Also found in lung, but not in spleen, thymus, bone marrow, liver and kidney.

Its subcellular location is the cytoplasm. The protein localises to the nucleus. It is found in the cell projection. It localises to the cilium. The protein resides in the cytoskeleton. Its subcellular location is the cilium basal body. Involved in lineage commitment of primary hemopoietic progenitors by restricting erythroid formation and enhancing myeloid formation. Interferes with erythropoietin-induced erythroid terminal differentiation by preventing cells from exiting the cell cycle through suppression of CDKN1B/p27Kip1 levels. Suppresses COP1 activity via CSN3 which activates p53 and induces cell cycle arrest. Binds DNA and affects the expression of a number of genes so may function as a transcription factor in the nucleus. This Mus musculus (Mouse) protein is Myeloid leukemia factor 1 (Mlf1).